A 601-amino-acid polypeptide reads, in one-letter code: Elongation factor 4 (601 aa).

The tr-type G domain maps to 7–189 (DRIRNFSIIA…ALVTRLPAPK (183 aa)). GTP contacts are provided by residues 19-24 (DHGKST) and 136-139 (NKVD).

The protein belongs to the TRAFAC class translation factor GTPase superfamily. Classic translation factor GTPase family. LepA subfamily.

Its subcellular location is the cell inner membrane. The enzyme catalyses GTP + H2O = GDP + phosphate + H(+). Its function is as follows. Required for accurate and efficient protein synthesis under certain stress conditions. May act as a fidelity factor of the translation reaction, by catalyzing a one-codon backward translocation of tRNAs on improperly translocated ribosomes. Back-translocation proceeds from a post-translocation (POST) complex to a pre-translocation (PRE) complex, thus giving elongation factor G a second chance to translocate the tRNAs correctly. Binds to ribosomes in a GTP-dependent manner. This is Elongation factor 4 from Granulibacter bethesdensis (strain ATCC BAA-1260 / CGDNIH1).